A 365-amino-acid polypeptide reads, in one-letter code: tRNA/tmRNA (uracil-C(5))-methyltransferase (365 aa).

Gln-189, Tyr-217, Asn-222, Glu-238, and Asp-298 together coordinate S-adenosyl-L-methionine. Cys-323 serves as the catalytic Nucleophile. Glu-357 serves as the catalytic Proton acceptor.

The protein belongs to the class I-like SAM-binding methyltransferase superfamily. RNA M5U methyltransferase family. TrmA subfamily.

The catalysed reaction is uridine(54) in tRNA + S-adenosyl-L-methionine = 5-methyluridine(54) in tRNA + S-adenosyl-L-homocysteine + H(+). The enzyme catalyses uridine(341) in tmRNA + S-adenosyl-L-methionine = 5-methyluridine(341) in tmRNA + S-adenosyl-L-homocysteine + H(+). Its function is as follows. Dual-specificity methyltransferase that catalyzes the formation of 5-methyluridine at position 54 (m5U54) in all tRNAs, and that of position 341 (m5U341) in tmRNA (transfer-mRNA). The sequence is that of tRNA/tmRNA (uracil-C(5))-methyltransferase from Shewanella piezotolerans (strain WP3 / JCM 13877).